We begin with the raw amino-acid sequence, 344 residues long: Phenylalanine--tRNA ligase alpha subunit (344 aa).

Glu-258 is a binding site for Mg(2+).

Belongs to the class-II aminoacyl-tRNA synthetase family. Phe-tRNA synthetase alpha subunit type 1 subfamily. In terms of assembly, tetramer of two alpha and two beta subunits. Mg(2+) serves as cofactor.

Its subcellular location is the cytoplasm. It catalyses the reaction tRNA(Phe) + L-phenylalanine + ATP = L-phenylalanyl-tRNA(Phe) + AMP + diphosphate + H(+). In Thiobacillus denitrificans (strain ATCC 25259 / T1), this protein is Phenylalanine--tRNA ligase alpha subunit.